Here is a 396-residue protein sequence, read N- to C-terminus: Pectate lyase 5 (396 aa).

The N-terminal stretch at 1 to 25 (MGIKHCCYILYFTLALVTLLQPVRS) is a signal peptide. N-linked (GlcNAc...) asparagine glycosylation is present at N36. A disulfide bridge links C53 with C70. Ca(2+) contacts are provided by D193, D217, and D221. R273 is an active-site residue.

The protein belongs to the polysaccharide lyase 1 family. Amb a subfamily. In terms of assembly, monomer. It depends on Ca(2+) as a cofactor. Post-translationally, the N-terminus is blocked. As to expression, pollen and flowers.

It catalyses the reaction Eliminative cleavage of (1-&gt;4)-alpha-D-galacturonan to give oligosaccharides with 4-deoxy-alpha-D-galact-4-enuronosyl groups at their non-reducing ends.. It functions in the pathway glycan metabolism; pectin degradation; 2-dehydro-3-deoxy-D-gluconate from pectin: step 2/5. In terms of biological role, has pectate lyase activity. This is Pectate lyase 5 from Ambrosia artemisiifolia (Common ragweed).